Here is a 246-residue protein sequence, read N- to C-terminus: Eukaryotic translation initiation factor 6 (246 aa).

2 positions are modified to phosphoserine; by CK1: serine 174 and serine 175.

This sequence belongs to the eIF-6 family. In terms of assembly, monomer. Associates with the 60S ribosomal subunit. Phosphorylation at Ser-174 and Ser-175 promotes nuclear export.

It is found in the cytoplasm. The protein localises to the nucleus. Its subcellular location is the nucleolus. Its function is as follows. Binds to the 60S ribosomal subunit and prevents its association with the 40S ribosomal subunit to form the 80S initiation complex in the cytoplasm. Is also involved in ribosome biogenesis. Associates with pre-60S subunits in the nucleus and is involved in its nuclear export. In Neurospora crassa (strain ATCC 24698 / 74-OR23-1A / CBS 708.71 / DSM 1257 / FGSC 987), this protein is Eukaryotic translation initiation factor 6 (tif-6).